The sequence spans 250 residues: MSGHSKWATIKRKKAATDQKRGNLFTKLVREITIAAKTGGGDPGGNPRLRLAIDTAKMNSMPNDNIQRAIKKGTGELEGVTYDEITYEGYGPGGIAIIIETATDNRNRTVADVRHIINRNNGSLGENGSVSWMFQRKGRLEVPRDGVSEEQLMEVLLDAGLEDLDSEDDNCFSVITAVKDLEAAKKALDEAGIGYENAKMDMIPDTLVEPGIDDASKAIKLIEALENCDDVQAVYSNLELSEQVMNSLDS.

Belongs to the TACO1 family.

It localises to the cytoplasm. The sequence is that of Probable transcriptional regulatory protein Cphamn1_0542 from Chlorobium phaeobacteroides (strain BS1).